The primary structure comprises 135 residues: AVCVSLLGAANIPPQPLNLYQFKNMIQCAGTQLWVAYVNYGCYCGKGGSGTPVDQLDRCCQTHDHCYHNAKRFGKCNPYFKTYEYTCNKPNLTCRGAKGSCGRNVCDCDRAAAICFAAAPYNLSNFGINKKTHCK.

Disulfide bonds link Cys28–Cys87, Cys42–Cys134, Cys44–Cys60, Cys59–Cys115, Cys66–Cys108, Cys76–Cys101, and Cys94–Cys106. Positions 43, 45, and 47 each coordinate Ca(2+). Residue His63 is part of the active site. Asp64 contacts Ca(2+). Asp109 is a catalytic residue.

It belongs to the phospholipase A2 family. Group I subfamily. D49 sub-subfamily. It depends on Ca(2+) as a cofactor. In terms of tissue distribution, expressed by the venom gland.

The protein resides in the secreted. It catalyses the reaction a 1,2-diacyl-sn-glycero-3-phosphocholine + H2O = a 1-acyl-sn-glycero-3-phosphocholine + a fatty acid + H(+). Snake venom phospholipase A2 (PLA2) that inhibits neuromuscular transmission by blocking acetylcholine release from the nerve termini. PLA2 catalyzes the calcium-dependent hydrolysis of the 2-acyl groups in 3-sn-phosphoglycerides. This is Basic phospholipase A2 10 from Bungarus fasciatus (Banded krait).